The following is a 185-amino-acid chain: Ribosome maturation factor RimP (185 aa).

Belongs to the RimP family.

It is found in the cytoplasm. In terms of biological role, required for maturation of 30S ribosomal subunits. The protein is Ribosome maturation factor RimP of Magnetococcus marinus (strain ATCC BAA-1437 / JCM 17883 / MC-1).